The chain runs to 309 residues: Mitochondrial phosphate carrier protein 1, mitochondrial (309 aa).

Over 1-15 (MTRVKSKLDEELSSP) the chain is Mitochondrial intermembrane. The chain crosses the membrane as a helical span at residues 16-36 (WFYTVCTMGGMLSAGTTHLAI). Solcar repeat units follow at residues 16–100 (WFYT…FKTL), 109–193 (NRTS…SVEF), and 210–289 (QQLG…IKVL). The Mitochondrial matrix portion of the chain corresponds to 37–74 (TPLDVLKVNMQVNPVKYNSIPSGFSTLLREHGHSYLWR). A helical transmembrane segment spans residues 75-94 (GWSGKLLGYGVQGGCRFGLY). The Mitochondrial intermembrane segment spans residues 95–111 (EYFKTLYSDVLPNHNRT). The chain crosses the membrane as a helical span at residues 112 to 132 (SIYFLSSASAQIFADMALCPF). Topologically, residues 133–167 (EAIKVRVQTQPMFAKGLLDGFPRVYRSEGLAGFHR) are mitochondrial matrix. Residues 168–187 (GLFPLWCRNLPFSMVMFSTF) traverse the membrane as a helical segment. The Mitochondrial intermembrane segment spans residues 188-208 (EQSVEFIYQKIIQKRKQDCSK). Residues 209-229 (AQQLGVTCLAGYTAGAVGTII) traverse the membrane as a helical segment. Topologically, residues 230–268 (SNPADVVLSSLYNNKAKNVLQAVRNIGFVGLFTRSLPVR) are mitochondrial matrix. A helical transmembrane segment spans residues 269–289 (ITIVGPVITLQWFFYDAIKVL). Topologically, residues 290–309 (SGFPTSGGVKKPVDAAKLSV) are mitochondrial intermembrane.

It belongs to the mitochondrial carrier (TC 2.A.29) family. As to expression, expressed in stems, leaves and flowers. Strong expression in the stamens of flowers.

The protein localises to the mitochondrion inner membrane. Its function is as follows. Transport of phosphate groups from the cytosol to the mitochondrial matrix. Mediates salt stress tolerance through an ATP-dependent pathway and via modulation of the gibberellin metabolism. This is Mitochondrial phosphate carrier protein 1, mitochondrial (MPT1) from Arabidopsis thaliana (Mouse-ear cress).